A 277-amino-acid chain; its full sequence is Large ribosomal subunit protein mL46 (277 aa).

At Lys228 the chain carries N6-acetyllysine.

The protein belongs to the mitochondrion-specific ribosomal protein mL46 family. In terms of assembly, component of the mitochondrial ribosome large subunit (39S) which comprises a 16S rRNA and about 50 distinct proteins.

Its subcellular location is the mitochondrion. This is Large ribosomal subunit protein mL46 (MRPL46) from Bos taurus (Bovine).